Here is a 330-residue protein sequence, read N- to C-terminus: 2-methoxy-6-polyprenyl-1,4-benzoquinol methylase, mitochondrial (330 aa).

Residues 1–42 (MAAPRSWALWSFCGCGWSRAVSGCRLPGLRSSSPRGPLGARL) constitute a mitochondrion transit peptide. S-adenosyl-L-methionine contacts are provided by residues threonine 117, aspartate 171, and 199 to 200 (DA).

Belongs to the class I-like SAM-binding methyltransferase superfamily. MenG/UbiE family. As to quaternary structure, component of a multi-subunit COQ enzyme complex, composed of at least COQ3, COQ4, COQ5, COQ6, COQ7 and COQ9. Interacts with PYURF; the interaction is direct, stabilizes COQ5 protein and associates PYURF with COQ enzyme complex.

The protein resides in the mitochondrion inner membrane. It carries out the reaction 2-methoxy-6-(all-trans-decaprenyl)benzene-1,4-diol + S-adenosyl-L-methionine = 5-methoxy-2-methyl-3-(all-trans-decaprenyl)benzene-1,4-diol + S-adenosyl-L-homocysteine + H(+). It participates in cofactor biosynthesis; ubiquinone biosynthesis. Methyltransferase required for the conversion of 2-decaprenyl-6-methoxy-1,4-benzoquinol (DDMQH2) to 2-decaprenyl-3-methyl-6-methoxy-1,4-benzoquinol (DMQH2). This is 2-methoxy-6-polyprenyl-1,4-benzoquinol methylase, mitochondrial from Bos taurus (Bovine).